A 668-amino-acid chain; its full sequence is MAHSIEELAITTIRTLSIDAIEKAKSGHPGMPMGAAPMAYTLWTKFMNHNPANPNWFNRDRFVLSAGHGSMLLYSLLHLSGYDVSMDDLKQFRQWGSKTPGHPEYGHTPGVEATTGPLGQGIAMAVGMAMAERHLAATYNRDGFEIINHYTYAICGDGDLMEGVASEAASLAGHLKLGRLIVLYDSNDISLDGELNLSFSENVAQRFQAYGWQYLRVEDGNNIEEIAKALEEARADLSRPTLIEVKTTIGYGAPNKAGTSGVHGAPLGAQEAKLTKEAYRWTFAEDFYVPEEVYAHFRATVQEPGAKKEAKWNEQLAAYEQAHPELAAQLKRAIEGKLPDGWEASLPVYEAGKSLATRSSSGEVINAIAKAVPQLFGGSADLASSNKTLIKGGGNFLPDSYEGRNVWFGVREFAMGAALNGMALHGGLKVFGGTFFVFSDYLRPAIRLAALMGLPVIYVLTHDSIAVGEDGPTHEPIEHLASLRAMPNLSVIRPADANETAAAWRLALESTDKPTALVLTRQDVPTLAATAELAYEGVKKGAYVVSPAKNGAPEALLLATGSEVGLAVKAQEALAAEGIHVSVISMPSWDRFEAQPKSYRDEVLPPAVTKRLAIEMGASLGWERYVGAEGDILAIDRFGASAPGEKIMAEYGFTVDNVVRRTKALLGK.

Position 28 (His-28) interacts with substrate. Residues His-68 and 116 to 118 contribute to the thiamine diphosphate site; that span reads GPL. Residue Asp-157 participates in Mg(2+) binding. Residues Gly-158 and Asn-187 each coordinate thiamine diphosphate. Mg(2+) is bound by residues Asn-187 and Ile-189. Substrate-binding residues include His-263, Arg-358, and Ser-385. His-263 contributes to the thiamine diphosphate binding site. Glu-412 acts as the Proton donor in catalysis. Residue Phe-438 coordinates thiamine diphosphate. Residues His-462, Asp-470, His-474, and Arg-521 each contribute to the substrate site.

Belongs to the transketolase family. In terms of assembly, homodimer. Requires Mg(2+) as cofactor. Thiamine diphosphate serves as cofactor.

The catalysed reaction is D-sedoheptulose 7-phosphate + D-glyceraldehyde 3-phosphate = aldehydo-D-ribose 5-phosphate + D-xylulose 5-phosphate. Functionally, catalyzes the transfer of a two-carbon ketol group from a ketose donor to an aldose acceptor, likely via a covalent intermediate with the cofactor thiamine pyrophosphate. Can use L-erythrulose as donor and D-ribose-5-phosphate as acceptor substrates, forming glycolaldehyde and D-sedoheptulose-7-phosphate. For synthetic purposes, is able to use hydroxypyruvate (HPA) as donor substrate, making the reaction irreversible due to the release of carbon dioxide, and various aldehydes as acceptor substrates, which leads to the corresponding ketoses. Thus, using hydroxypyruvate as donor and three different aldehydes as acceptors, i.e. glycolaldehyde, D-glyceraldehyde and butyraldehyde, the enzyme stereoselectively forms the corresponding products L-erythrulose, D-xylulose and (3S)-1,3-dihydroxyhexan-2-one, respectively. The sequence is that of Transketolase from Geobacillus stearothermophilus (Bacillus stearothermophilus).